We begin with the raw amino-acid sequence, 242 residues long: tRNA uridine(34) hydroxylase (242 aa).

Residues 128 to 222 form the Rhodanese domain; the sequence is DGREVVMLDT…YFEETGGPGY (95 aa). Cysteine 182 functions as the Cysteine persulfide intermediate in the catalytic mechanism.

It belongs to the TrhO family.

It carries out the reaction uridine(34) in tRNA + AH2 + O2 = 5-hydroxyuridine(34) in tRNA + A + H2O. Catalyzes oxygen-dependent 5-hydroxyuridine (ho5U) modification at position 34 in tRNAs. The polypeptide is tRNA uridine(34) hydroxylase (Bordetella avium (strain 197N)).